The primary structure comprises 1461 residues: Gag-Pro-Pol polyprotein (1461 aa).

Residue glycine 2 is the site of N-myristoyl glycine; by host attachment. Residues 94–97 (PSAP) carry the PTAP/PSAP motif motif. A disordered region spans residues 94–121 (PSAPAAPVPTPICPTTTPPPPPPPSPEA). A compositionally biased stretch (pro residues) spans 97–121 (PAAPVPTPICPTTTPPPPPPPSPEA). Residues 124 to 127 (PPPY) carry the PPXY motif motif. The short motif at 130–133 (PTTT) is the PTAP/PSAP motif element. CCHC-type zinc fingers lie at residues 361 to 378 (QPCF…DCTQ) and 384 to 401 (GPCP…DCPQ). The tract at residues 399 to 425 (CPQLKPPQEEGEPLLLDLPSTSGTTEE) is disordered. The 79-residue stretch at 473 to 551 (TQALLDTGAD…NKWTIIGRDA (79 aa)) folds into the Peptidase A2 domain. Aspartate 478 serves as the catalytic For protease activity; shared with dimeric partner. A Reverse transcriptase domain is found at 612–802 (LEAGHIEPYS…GQIRFLGQVI (191 aa)). Mg(2+) contacts are provided by aspartate 678, aspartate 753, aspartate 754, aspartate 1038, glutamate 1073, aspartate 1095, aspartate 1156, aspartate 1229, and aspartate 1286. The region spanning 1029–1164 (LDTAPCLFSD…TDSLILAPLV (136 aa)) is the RNase H type-1 domain. Positions 1218 to 1387 (RGLLPNHIWQ…PPIPEASTPP (170 aa)) constitute an Integrase catalytic domain. Positions 1392–1441 (KWFYYKLPGLTNQRWKGPLQSLQEAAGAALLSIDGSPRWIPWRFLKKAAC) form a DNA-binding region, integrase-type.

As to quaternary structure, homodimer; the homodimers are part of the immature particles. Interacts with human TSG101 and NEDD4; these interactions are essential for budding and release of viral particles. In terms of assembly, homodimer; further assembles as homohexamers. It depends on Mg(2+) as a cofactor. In terms of processing, phosphorylation of the matrix protein p19 by MAPK1 seems to play a role in budding. Post-translationally, myristoylated. Myristoylation of the matrix (MA) domain mediates the transport and binding of Gag polyproteins to the host plasma membrane and is required for the assembly of viral particles. Specific enzymatic cleavages by the viral protease yield mature proteins. The polyprotein is cleaved during and after budding, this process is termed maturation. The protease is autoproteolytically processed at its N- and C-termini.

Its subcellular location is the virion. It carries out the reaction Endonucleolytic cleavage to 5'-phosphomonoester.. It catalyses the reaction DNA(n) + a 2'-deoxyribonucleoside 5'-triphosphate = DNA(n+1) + diphosphate. The matrix domain targets Gag, Gag-Pro and Gag-Pro-Pol polyproteins to the plasma membrane via a multipartite membrane binding signal, that includes its myristoylated N-terminus. Its function is as follows. Matrix protein. In terms of biological role, forms the spherical core of the virus that encapsulates the genomic RNA-nucleocapsid complex. Functionally, binds strongly to viral nucleic acids and promote their aggregation. Also destabilizes the nucleic acids duplexes via highly structured zinc-binding motifs. The aspartyl protease mediates proteolytic cleavages of Gag and Gag-Pol polyproteins during or shortly after the release of the virion from the plasma membrane. Cleavages take place as an ordered, step-wise cascade to yield mature proteins. This process is called maturation. Displays maximal activity during the budding process just prior to particle release from the cell (Potential). Cleaves the translation initiation factor eIF4G leading to the inhibition of host cap-dependent translation. Its function is as follows. RT is a multifunctional enzyme that converts the viral RNA genome into dsDNA in the cytoplasm, shortly after virus entry into the cell. This enzyme displays a DNA polymerase activity that can copy either DNA or RNA templates, and a ribonuclease H (RNase H) activity that cleaves the RNA strand of RNA-DNA heteroduplexes in a partially processive 3' to 5'-endonucleasic mode. Conversion of viral genomic RNA into dsDNA requires many steps. A tRNA-Pro binds to the primer-binding site (PBS) situated at the 5'-end of the viral RNA. RT uses the 3' end of the tRNA primer to perform a short round of RNA-dependent minus-strand DNA synthesis. The reading proceeds through the U5 region and ends after the repeated (R) region which is present at both ends of viral RNA. The portion of the RNA-DNA heteroduplex is digested by the RNase H, resulting in a ssDNA product attached to the tRNA primer. This ssDNA/tRNA hybridizes with the identical R region situated at the 3' end of viral RNA. This template exchange, known as minus-strand DNA strong stop transfer, can be either intra- or intermolecular. RT uses the 3' end of this newly synthesized short ssDNA to perform the RNA-dependent minus-strand DNA synthesis of the whole template. RNase H digests the RNA template except for a polypurine tract (PPT) situated at the 5' end of the genome. It is not clear if both polymerase and RNase H activities are simultaneous. RNase H probably can proceed both in a polymerase-dependent (RNA cut into small fragments by the same RT performing DNA synthesis) and a polymerase-independent mode (cleavage of remaining RNA fragments by free RTs). Secondly, RT performs DNA-directed plus-strand DNA synthesis using the PPT that has not been removed by RNase H as primer. PPT and tRNA primers are then removed by RNase H. The 3' and 5' ssDNA PBS regions hybridize to form a circular dsDNA intermediate. Strand displacement synthesis by RT to the PBS and PPT ends produces a blunt ended, linear dsDNA copy of the viral genome that includes long terminal repeats (LTRs) at both ends. In terms of biological role, catalyzes viral DNA integration into the host chromosome, by performing a series of DNA cutting and joining reactions. In Human T-cell leukemia virus 2 (HTLV-2), this protein is Gag-Pro-Pol polyprotein (gag-pro-pol).